The sequence spans 320 residues: Cell division protein FtsQ (320 aa).

The disordered stretch occupies residues 1–24; the sequence is MAQTIKRGGKGVRRATAARSAQRK. At 1–52 the chain is on the cytoplasmic side; the sequence is MAQTIKRGGKGVRRATAARSAQRKVQTARQQTGSVLDSVLRWLPFSEETLHR. The chain crosses the membrane as a helical span at residues 53–73; sequence ILMTLILAAAAGLVWTVAVMA. Residues 74–320 lie on the Periplasmic side of the membrane; sequence GIPALVSEQA…RAASAKSDEG (247 aa). The POTRA domain maps to 92–160; it reads FKVSHLEVRG…DTLVIDIVER (69 aa). The disordered stretch occupies residues 296 to 320; sequence AAEKRAEEQARAEAKRAASAKSDEG.

This sequence belongs to the FtsQ/DivIB family. FtsQ subfamily.

It is found in the cell inner membrane. Functionally, essential cell division protein. The protein is Cell division protein FtsQ of Novosphingobium aromaticivorans (strain ATCC 700278 / DSM 12444 / CCUG 56034 / CIP 105152 / NBRC 16084 / F199).